The sequence spans 397 residues: UPF0597 protein Tmel_1007 (397 aa).

Belongs to the UPF0597 family.

In Thermosipho melanesiensis (strain DSM 12029 / CIP 104789 / BI429), this protein is UPF0597 protein Tmel_1007.